The primary structure comprises 548 residues: T-complex protein 1 subunit alpha (548 aa).

This sequence belongs to the TCP-1 chaperonin family. Heterooligomeric complex of about 850 to 900 kDa that forms two stacked rings, 12 to 16 nm in diameter.

The protein resides in the cytoplasm. Functionally, molecular chaperone; assists the folding of proteins upon ATP hydrolysis. Known to play a role, in vitro, in the folding of actin and tubulin. The sequence is that of T-complex protein 1 subunit alpha (tcp1) from Dictyostelium discoideum (Social amoeba).